The sequence spans 31 residues: Protamine CIII (31 aa).

Residues 1 to 31 are disordered; that stretch reads MPRRRRASRPVRRRRRPRVSRRRRRGGRRRR.

As to expression, testis.

It is found in the nucleus. It localises to the chromosome. In terms of biological role, protamines substitute for histones in the chromatin of sperm during the haploid phase of spermatogenesis. They compact sperm DNA into a highly condensed, stable and inactive complex. This chain is Protamine CIII, found in Oncorhynchus mykiss (Rainbow trout).